Here is a 77-residue protein sequence, read N- to C-terminus: Acyl carrier protein (77 aa).

A Carrier domain is found at 1 to 76; sequence MSLEDDVKSI…DVITYIKTRQ (76 aa). S36 carries the post-translational modification O-(pantetheine 4'-phosphoryl)serine.

It belongs to the acyl carrier protein (ACP) family. 4'-phosphopantetheine is transferred from CoA to a specific serine of apo-ACP by AcpS. This modification is essential for activity because fatty acids are bound in thioester linkage to the sulfhydryl of the prosthetic group.

Its subcellular location is the cytoplasm. The protein operates within lipid metabolism; fatty acid biosynthesis. Functionally, carrier of the growing fatty acid chain in fatty acid biosynthesis. The chain is Acyl carrier protein from Chlamydia caviae (strain ATCC VR-813 / DSM 19441 / 03DC25 / GPIC) (Chlamydophila caviae).